Here is a 3704-residue protein sequence, read N- to C-terminus: Fatty acid synthase 2 (3704 aa).

Positions 27–41 (AVSAHGSPPSSASPG) are enriched in low complexity. The disordered stretch occupies residues 27–52 (AVSAHGSPPSSASPGPDDKAFSVDGT). The interval 216–475 (ALFGGQGNNH…QARIPFSKRK (260 aa)) is acetyltransferase (AT) domain. The interval 639–887 (SRLLGKPPIM…LIASTQGCSD (249 aa)) is enoyl reductase (ER) domain. The segment at 1216–1709 (GEQPSWIRAL…VPGDQLSVQL (494 aa)) is dehydratase (DH) domain. The 107-residue stretch at 1624-1730 (PKTNEPYSRA…VQIDASNQRG (107 aa)) folds into the MaoC-like domain. The malonyl/palmitoyl transferase (MT/PT) domain stretch occupies residues 1747-2112 (YVFTGQGSQA…IEHVSEVTRS (366 aa)). The region spanning 2265–2343 (DERLDPLLTV…AALRPGYSGE (79 aa)) is the Carrier domain. Residue S2303 is modified to O-(pantetheine 4'-phosphoryl)serine. The ketoreductase (KR) domain stretch occupies residues 2733 to 2969 (GLDVLLTGVG…LGLVEPEFAS (237 aa)). The Ketosynthase family 3 (KS3) domain occupies 3176 to 3623 (QQEIELTHDL…QVGGIAMILH (448 aa)). Active-site for beta-ketoacyl synthase activity residues include C3359, H3506, and H3547.

In the N-terminal section; belongs to the fungal fatty acid synthetase subunit beta family. This sequence in the C-terminal section; belongs to the thiolase-like superfamily. Fungal fatty acid synthetase subunit alpha family.

The protein operates within secondary metabolite biosynthesis. Fatty acid synthase; part of the gene cluster that mediates the biosynthesis of the glycolipid biosurfactant ustilagic acid (UA). UA is a secreted cellobiose glycolipid that is toxic for many microorganisms and confers biocontrol activity to U.maydis. UA consists of 15,16-dihydroxypalmitic or 2,15,16-trihydroxypalmitic acid, which is O-glycosidically linked to cellobiose at its terminal hydroxyl group. In addition, the cellobiose moiety is acetylated and acylated with a short-chain hydroxy fatty acid. UA biosynthesis starts with omega-hydroxylation of palmitic acid catalyzed by the cytochrome P450 monooxygenase cyp1. Terminal hydroxylation of palmitic acid precedes subterminal hydroxylation catalyzed by the cytochrome P450 monooxygenase cyp2. Sequential glucosylation of the hydroxy fatty acid is probably catalyzed by the glycosyltransferase ugt1. The cellobiose lipid is further decorated by acetylation of the proximal glucose residue and by acylation with a short-chain beta-hydroxy fatty acid at the distal glucose residue. The acyltransferase uat1 may be a good candidate for catalyzing either acetylation or acylation of the cellobiose lipid. The fatty acid synthase fas2 may be involved in synthesis of the carbon backbone of the short-chain beta-hydroxy fatty acid esterified to the cellobiose disaccharide. The secreted UA consists of a mixture of both alpha-hydroxylated and non-hydroxylated glycolipids; therefore, alpha-hydroxylation of the long-chain fatty, catalyzed by the fatty acid hydroxylase ahd1, occurs late in UA biosynthesis and may be the last step before secretion. This Mycosarcoma maydis (Corn smut fungus) protein is Fatty acid synthase 2.